Consider the following 506-residue polypeptide: Galactose/methyl galactoside import ATP-binding protein MglA (506 aa).

2 consecutive ABC transporter domains span residues 14–249 and 260–506; these read LTMT…VGRE and TPKE…AKYL. 46-53 is a binding site for ATP; the sequence is GENGAGKS.

This sequence belongs to the ABC transporter superfamily. Galactose/methyl galactoside importer (TC 3.A.1.2.3) family. In terms of assembly, the complex is composed of one ATP-binding protein (MglA), two transmembrane proteins (MglC) and a solute-binding protein (MglB).

It localises to the cell inner membrane. It catalyses the reaction D-galactose(out) + ATP + H2O = D-galactose(in) + ADP + phosphate + H(+). The enzyme catalyses methyl beta-D-galactoside(out) + ATP + H2O = methyl beta-D-galactoside(in) + ADP + phosphate + H(+). Its function is as follows. Part of the ABC transporter complex MglABC involved in galactose/methyl galactoside import. Responsible for energy coupling to the transport system. This chain is Galactose/methyl galactoside import ATP-binding protein MglA, found in Pasteurella multocida (strain Pm70).